Here is a 426-residue protein sequence, read N- to C-terminus: Histidine--tRNA ligase (426 aa).

Belongs to the class-II aminoacyl-tRNA synthetase family.

The protein resides in the cytoplasm. It catalyses the reaction tRNA(His) + L-histidine + ATP = L-histidyl-tRNA(His) + AMP + diphosphate + H(+). The protein is Histidine--tRNA ligase (hisS) of Thermoplasma volcanium (strain ATCC 51530 / DSM 4299 / JCM 9571 / NBRC 15438 / GSS1).